The sequence spans 703 residues: Arylphorin subunit beta (703 aa).

The N-terminal stretch at methionine 1 to glycine 16 is a signal peptide. N-linked (GlcNAc...) asparagine glycosylation is found at asparagine 72 and asparagine 211.

Belongs to the hemocyanin family. In terms of assembly, arylphorin is a hexamer of subunits alpha and beta. As to expression, fat body.

It is found in the secreted. It localises to the extracellular space. Arylphorin is a larval storage protein (LSP) which may serve as a storage protein used primarily as a source of aromatic amino acids for protein synthesis during metamorphosis. It is a constituent of the sclerotizing system of the cuticle, and serves as a carrier for ecdysteroid hormone. This chain is Arylphorin subunit beta, found in Manduca sexta (Tobacco hawkmoth).